The sequence spans 104 residues: Large ribosomal subunit protein uL24 (104 aa).

It belongs to the universal ribosomal protein uL24 family. As to quaternary structure, part of the 50S ribosomal subunit.

In terms of biological role, one of two assembly initiator proteins, it binds directly to the 5'-end of the 23S rRNA, where it nucleates assembly of the 50S subunit. One of the proteins that surrounds the polypeptide exit tunnel on the outside of the subunit. This Buchnera aphidicola subsp. Schizaphis graminum (strain Sg) protein is Large ribosomal subunit protein uL24.